Here is a 164-residue protein sequence, read N- to C-terminus: Protein eva-1 homolog B (164 aa).

The helical transmembrane segment at 29 to 49 (GLYFVLGVCFGLLLTLCLLVI) threads the bilayer. The disordered stretch occupies residues 56-110 (RSRPRTPAPRRDPRSSTLEPEDEDDEEDEDTMTRLGPDDTLQGQELSTEPDGPLS). Residues 74 to 85 (EPEDEDDEEDED) are compositionally biased toward acidic residues. Phosphothreonine is present on residues Thr86, Thr149, and Thr157.

This sequence belongs to the EVA1 family.

Its subcellular location is the membrane. The protein is Protein eva-1 homolog B (Eva1b) of Mus musculus (Mouse).